Consider the following 104-residue polypeptide: N(2)-fixation sustaining protein CowN (104 aa).

It belongs to the CowN family.

Is required to sustain N(2)-dependent growth in the presence of low levels of carbon monoxide (CO). Probably acts by protecting the N(2) fixation ability of the nitrogenase complex, which is inactivated in the presence of CO. The sequence is that of N(2)-fixation sustaining protein CowN from Arcobacter nitrofigilis (strain ATCC 33309 / DSM 7299 / CCUG 15893 / LMG 7604 / NCTC 12251 / CI) (Campylobacter nitrofigilis).